A 429-amino-acid polypeptide reads, in one-letter code: Phosphoribosylamine--glycine ligase (429 aa).

Residues 109-316 (KDFLARHQIP…LVELCLAAID (208 aa)) enclose the ATP-grasp domain. 135–196 (VREQGAPIVV…EEFLDGEEAS (62 aa)) is a binding site for ATP. The disordered stretch occupies residues 212-234 (SQDHKRVGDKDTGPNTGGMGAYS). Positions 213–223 (QDHKRVGDKDT) are enriched in basic and acidic residues. Glu286 and Asn288 together coordinate Mg(2+).

This sequence belongs to the GARS family. Mg(2+) serves as cofactor. It depends on Mn(2+) as a cofactor.

It carries out the reaction 5-phospho-beta-D-ribosylamine + glycine + ATP = N(1)-(5-phospho-beta-D-ribosyl)glycinamide + ADP + phosphate + H(+). The protein operates within purine metabolism; IMP biosynthesis via de novo pathway; N(1)-(5-phospho-D-ribosyl)glycinamide from 5-phospho-alpha-D-ribose 1-diphosphate: step 2/2. The sequence is that of Phosphoribosylamine--glycine ligase from Vibrio vulnificus (strain CMCP6).